A 478-amino-acid chain; its full sequence is Glutamate--tRNA ligase (478 aa).

A 'HIGH' region motif is present at residues 15–25 (PSPTGFLHIGG). The 'KMSKS' region signature appears at 244 to 248 (KLSKR). Lysine 247 contacts ATP.

It belongs to the class-I aminoacyl-tRNA synthetase family. Glutamate--tRNA ligase type 1 subfamily. Monomer.

The protein localises to the cytoplasm. The catalysed reaction is tRNA(Glu) + L-glutamate + ATP = L-glutamyl-tRNA(Glu) + AMP + diphosphate. Catalyzes the attachment of glutamate to tRNA(Glu) in a two-step reaction: glutamate is first activated by ATP to form Glu-AMP and then transferred to the acceptor end of tRNA(Glu). The sequence is that of Glutamate--tRNA ligase from Bradyrhizobium sp. (strain ORS 278).